A 60-amino-acid chain; its full sequence is Metallothionein B (60 aa).

The interval 1 to 28 is beta; that stretch reads MDPCDCSKSGTCNCGGSCTCTNCSCTTC. A divalent metal cation contacts are provided by Cys4, Cys6, Cys12, Cys14, Cys18, Cys20, Cys23, Cys25, Cys28, Cys32, Cys33, Cys35, Cys36, Cys40, Cys43, Cys47, Cys49, Cys54, Cys58, and Cys59. Residues 29–60 are alpha; it reads KKSCCPCCPSGCTKCASGCVCKGKTCDTSCCQ.

It belongs to the metallothionein superfamily. Type 1 family.

Its function is as follows. Metallothioneins have a high content of cysteine residues that bind various heavy metals. The chain is Metallothionein B (mtb) from Dicentrarchus labrax (European seabass).